The chain runs to 52 residues: Eukaryotic translation initiation factor 5A (52 aa).

Lys-42 carries the post-translational modification Hypusine.

The protein belongs to the eIF-5A family. Post-translationally, lys-42 undergoes hypusination, a unique post-translational modification that consists in the addition of a butylamino group from spermidine to lysine side chain, leading to the formation of the unusual amino acid hypusine. eIF-5As are the only known proteins to undergo this modification, which is essential for their function.

The protein localises to the cytoplasm. Translation factor that promotes translation elongation and termination, particularly upon ribosome stalling at specific amino acid sequence contexts. Binds between the exit (E) and peptidyl (P) site of the ribosome and promotes rescue of stalled ribosome: specifically required for efficient translation of polyproline-containing peptides as well as other motifs that stall the ribosome. Acts as a ribosome quality control (RQC) cofactor by joining the RQC complex to facilitate peptidyl transfer during CAT tailing step. The polypeptide is Eukaryotic translation initiation factor 5A (Schistosoma mansoni (Blood fluke)).